A 173-amino-acid polypeptide reads, in one-letter code: Large ribosomal subunit protein uL10 (173 aa).

It belongs to the universal ribosomal protein uL10 family. Part of the ribosomal stalk of the 50S ribosomal subunit. The N-terminus interacts with L11 and the large rRNA to form the base of the stalk. The C-terminus forms an elongated spine to which L12 dimers bind in a sequential fashion forming a multimeric L10(L12)X complex.

Functionally, forms part of the ribosomal stalk, playing a central role in the interaction of the ribosome with GTP-bound translation factors. In Nitratidesulfovibrio vulgaris (strain ATCC 29579 / DSM 644 / CCUG 34227 / NCIMB 8303 / VKM B-1760 / Hildenborough) (Desulfovibrio vulgaris), this protein is Large ribosomal subunit protein uL10.